The following is a 79-amino-acid chain: MQALRVSQALIRSFSSTARNRFQNRVREKQKLFQEDNDIPLYLKGGIVDNILYRVTMTLCLGGTVYSLYSLGWASFPRN.

The N-terminal 21 residues, 1–21 (MQALRVSQALIRSFSSTARNR), are a transit peptide targeting the mitochondrion. The Mitochondrial matrix segment spans residues 22-46 (FQNRVREKQKLFQEDNDIPLYLKGG). The chain crosses the membrane as a helical span at residues 47-75 (IVDNILYRVTMTLCLGGTVYSLYSLGWAS). Over 76–79 (FPRN) the chain is Mitochondrial intermembrane.

This sequence belongs to the cytochrome c oxidase VIIa family. In terms of assembly, component of the complex IV (CIV, cytochrome c oxidase), a multisubunit enzyme composed of 14 subunits. The complex is composed of a catalytic core of 3 subunits MT-CO1, MT-CO2 and MT-CO3, encoded in the mitochondrial DNA, and 11 supernumerary subunits COX4I1 (or COX4I2), COX5A, COX5B, COX6A2 (or COX6A1), COX6B1 (or COX6B2), COX6C, COX7A1 (or COX7A2), COX7B, COX7C, COX8B and NDUFA4, which are encoded in the nuclear genome. The complex exists as a monomer or a dimer and forms supercomplexes (SCs) in the inner mitochondrial membrane with NADH-ubiquinone oxidoreductase (complex I, CI) and ubiquinol-cytochrome c oxidoreductase (cytochrome b-c1 complex, complex III, CIII), resulting in different assemblies (supercomplex SCI(1)III(2)IV(1) and megacomplex MCI(2)III(2)IV(2)).

It is found in the mitochondrion inner membrane. The protein operates within energy metabolism; oxidative phosphorylation. Functionally, component of the mitochondrial respiratory complex IV (CIV, also named cytochrome c oxidase complex), the last enzyme in the mitochondrial electron transport chain which drives oxidative phosphorylation. The CIV complex is the component of the respiratory chain that catalyzes the reduction of oxygen to water. Acts as an assembly factor that specifically drives the homodimerization of CIV complexes, mediating the formation of mitochondrial respiratory supercomplexes (respirasomes) containing two CIV: supercomplxes with two molecules of CIV show improved activity. Despite being highly expressed in brown adipose tissue, not required for thermogenesis. The polypeptide is Cytochrome c oxidase subunit 7A1, mitochondrial (COX7A1) (Homo sapiens (Human)).